Reading from the N-terminus, the 291-residue chain is Potassium-transporting ATPase subunit beta (291 aa).

Residues 1–36 (MAALQEKKSCSQRMEEFRHYCWNPDTGQMLGRTLSR) lie on the Cytoplasmic side of the membrane. Residues 37-57 (WVWISLYYVAFYVVMTGLFAL) form a helical; Signal-anchor for type II membrane protein membrane-spanning segment. At 58–291 (CIYVLMQTID…KVEFKLKIQK (234 aa)) the chain is on the extracellular side. N99, N103, N130, N146, and N161 each carry an N-linked (GlcNAc...) asparagine glycan. C131 and C152 are oxidised to a cystine. The cysteines at positions 162 and 178 are disulfide-linked. N193 and N222 each carry an N-linked (GlcNAc...) asparagine glycan. Positions 194 to 291 (STPPRVDCTF…KVEFKLKIQK (98 aa)) are immunoglobulin-like. C201 and C263 are disulfide-bonded.

The protein belongs to the X(+)/potassium ATPases subunit beta family. As to quaternary structure, the ATPase pump is composed of two subunits: alpha (catalytic) and beta (regulatory). Interacts with alpha subunit ATP12A; this interaction is required for the formation of a functionally active pump and targeting at the plasma membrane. Interacts (via N-terminus) with alpha subunit ATP4A (via the P-domain). N-glycosylation is necessary for assembly and functional expression of the pump at the plasma membrane.

The protein resides in the apical cell membrane. The protein localises to the cell membrane. Its function is as follows. The beta subunit of the gastric H(+)/K(+) ATPase pump which transports H(+) ions in exchange for K(+) ions across the apical membrane of parietal cells. Plays a structural and regulatory role in the assembly and membrane targeting of a functionally active pump. Within a transport cycle, the transfer of a H(+) ion across the membrane is coupled to ATP hydrolysis and is associated with a transient phosphorylation of the alpha subunit that shifts the pump conformation from inward-facing (E1) to outward-facing state (E2). Interacts with the phosphorylation domain of the alpha subunit and functions as a ratchet, stabilizing the lumenal-open E2 conformation and preventing the reverse reaction of the transport cycle. This is Potassium-transporting ATPase subunit beta (ATP4B) from Oryctolagus cuniculus (Rabbit).